Here is a 663-residue protein sequence, read N- to C-terminus: Protein-arginine deiminase type-4 (663 aa).

Asn-153, Asp-155, Asp-157, Asp-165, Asp-168, Glu-170, Asp-176, and Asp-179 together coordinate Ca(2+). 3 positions are modified to citrulline: Arg-205, Arg-212, and Arg-218. Gln-349 is a Ca(2+) binding site. Asp-350 is a catalytic residue. Glu-351, Glu-353, Asp-369, and Ser-370 together coordinate Ca(2+). Position 372 is a citrulline (Arg-372). Asn-373 provides a ligand contact to Ca(2+). Citrulline is present on residues Arg-374 and Arg-383. Substrate is bound at residue Arg-374. Residues Asp-388, Phe-407, Leu-410, and Glu-411 each coordinate Ca(2+). Catalysis depends on residues His-471 and Asp-473. Arg-639 is a substrate binding site. Cys-645 is an active-site residue.

Belongs to the protein arginine deiminase family. The cofactor is Ca(2+). In terms of processing, autocitrullination at Arg-372 and Arg-374 inactivates the enzyme. Expressed in eosinophils and neutrophils, not expressed in peripheral monocytes or lymphocytes.

It localises to the cytoplasm. Its subcellular location is the nucleus. The protein resides in the cytoplasmic granule. It catalyses the reaction L-arginyl-[protein] + H2O = L-citrullyl-[protein] + NH4(+). Its activity is regulated as follows. Strongly Inhibited by F-amidine and N-alpha-benzoyl-N5-(2-chloro-1-iminoethyl)-L-ornithine amide (Cl-amidine). These inhibitors are however not specific to PADI4 and also inhibit other members of the family. Incorporation of a carboxylate ortho to the backbone amide of Cl-amidine results in inhibitors with increased specificity for PADI4: N-alpha-(2-carboxyl)benzoyl-N(5)-(2-fluoro-1-iminoethyl)-L-ornithine amide (o-F-amidine) and N-alpha-(2-carboxyl)benzoyl-N(5)-(2-chloro-1-iminoethyl)-L-ornithine amide (o-Cl-amidine). Strongly and specifically inhibited by Thr-Asp-F-amidine (TDFA); other members of the family are not inhibited. Its function is as follows. Catalyzes the citrullination/deimination of arginine residues of proteins such as histones, thereby playing a key role in histone code and regulation of stem cell maintenance. Citrullinates histone H1 at 'Arg-54' (to form H1R54ci), histone H3 at 'Arg-2', 'Arg-8', 'Arg-17' and/or 'Arg-26' (to form H3R2ci, H3R8ci, H3R17ci, H3R26ci, respectively) and histone H4 at 'Arg-3' (to form H4R3ci). Acts as a key regulator of stem cell maintenance by mediating citrullination of histone H1: citrullination of 'Arg-54' of histone H1 (H1R54ci) results in H1 displacement from chromatin and global chromatin decondensation, thereby promoting pluripotency and stem cell maintenance. Promotes profound chromatin decondensation during the innate immune response to infection in neutrophils by mediating formation of H1R54ci. Required for the formation of neutrophil extracellular traps (NETs); NETs are mainly composed of DNA fibers and are released by neutrophils to bind pathogens during inflammation. Citrullination of histone H3 prevents their methylation by CARM1 and HRMT1L2/PRMT1 and represses transcription. Citrullinates EP300/P300 at 'Arg-2142', which favors its interaction with NCOA2/GRIP1. This is Protein-arginine deiminase type-4 (PADI4) from Homo sapiens (Human).